The sequence spans 158 residues: NADPH-dependent 7-cyano-7-deazaguanine reductase (158 aa).

Catalysis depends on Cys56, which acts as the Thioimide intermediate. Catalysis depends on Asp63, which acts as the Proton donor. Substrate-binding positions include 78-80 (VES) and 97-98 (HE).

It belongs to the GTP cyclohydrolase I family. QueF type 1 subfamily.

The protein localises to the cytoplasm. It carries out the reaction 7-aminomethyl-7-carbaguanine + 2 NADP(+) = 7-cyano-7-deazaguanine + 2 NADPH + 3 H(+). It functions in the pathway tRNA modification; tRNA-queuosine biosynthesis. In terms of biological role, catalyzes the NADPH-dependent reduction of 7-cyano-7-deazaguanine (preQ0) to 7-aminomethyl-7-deazaguanine (preQ1). This Rhodopseudomonas palustris (strain BisB5) protein is NADPH-dependent 7-cyano-7-deazaguanine reductase.